The chain runs to 292 residues: Phosphoribosylglycinamide formyltransferase, chloroplastic (292 aa).

A chloroplast-targeting transit peptide spans 1 to 65 (MESRVLFSSQ…KAASSTPQIV (65 aa)). Position 88 to 90 (88 to 90 (GSN)) interacts with N(1)-(5-phospho-beta-D-ribosyl)glycinamide. Residues 167-170 (LKLI) and N184 each bind (6R)-10-formyltetrahydrofolate. H186 acts as the Proton donor in catalysis. Position 227 (D227) interacts with (6R)-10-formyltetrahydrofolate. E256 provides a ligand contact to N(1)-(5-phospho-beta-D-ribosyl)glycinamide.

The protein belongs to the GART family.

Its subcellular location is the plastid. It is found in the chloroplast. The catalysed reaction is N(1)-(5-phospho-beta-D-ribosyl)glycinamide + (6R)-10-formyltetrahydrofolate = N(2)-formyl-N(1)-(5-phospho-beta-D-ribosyl)glycinamide + (6S)-5,6,7,8-tetrahydrofolate + H(+). It functions in the pathway purine metabolism; IMP biosynthesis via de novo pathway; N(2)-formyl-N(1)-(5-phospho-D-ribosyl)glycinamide from N(1)-(5-phospho-D-ribosyl)glycinamide (10-formyl THF route): step 1/1. The polypeptide is Phosphoribosylglycinamide formyltransferase, chloroplastic (PUR3) (Arabidopsis thaliana (Mouse-ear cress)).